The primary structure comprises 67 residues: Myrmicitoxin(1)-Pm6a (67 aa).

The signal sequence occupies residues 1–25 (MRSLYLSFSLTIIFVLVIMHAEAKA). Residues 26 to 37 (ISEPNAIAEADP) constitute a propeptide that is removed on maturation. Residue Val66 is modified to Valine amide.

The protein belongs to the formicidae venom clade 3 family. In terms of tissue distribution, expressed by the venom gland.

The protein resides in the secreted. Its function is as follows. Toxin that causes a rapid and irreversible paralysis when intrathoracically injected into insects (blowflies). Does not cause spontaneous nocifensive behaviors by intraplantar injection in mice. Exhibits hemolytic and cytotoxic activities on HEK293 cells. The sequence is that of Myrmicitoxin(1)-Pm6a from Pogonomyrmex maricopa (Maricopa harvester ant).